The following is a 447-amino-acid chain: N-succinylarginine dihydrolase (447 aa).

Substrate is bound by residues A19–S28, N110, and H137–R138. The active site involves E174. R212 provides a ligand contact to substrate. H248 is an active-site residue. Residues D250 and N359 each contribute to the substrate site. Residue C365 is the Nucleophile of the active site.

Belongs to the succinylarginine dihydrolase family. Homodimer.

The catalysed reaction is N(2)-succinyl-L-arginine + 2 H2O + 2 H(+) = N(2)-succinyl-L-ornithine + 2 NH4(+) + CO2. The protein operates within amino-acid degradation; L-arginine degradation via AST pathway; L-glutamate and succinate from L-arginine: step 2/5. Its function is as follows. Catalyzes the hydrolysis of N(2)-succinylarginine into N(2)-succinylornithine, ammonia and CO(2). The polypeptide is N-succinylarginine dihydrolase (Escherichia coli O8 (strain IAI1)).